A 664-amino-acid chain; its full sequence is DNA ligase (664 aa).

NAD(+)-binding positions include 32–36 (DKEYD) and 80–81 (SL). The active-site N6-AMP-lysine intermediate is lysine 122. Positions 144, 178, and 314 each coordinate NAD(+). Zn(2+) is bound by residues cysteine 407, cysteine 410, cysteine 423, and cysteine 429. Positions 587-664 (IDENPFMDKT…NEEEFSNKIK (78 aa)) constitute a BRCT domain.

This sequence belongs to the NAD-dependent DNA ligase family. LigA subfamily. Mg(2+) is required as a cofactor. The cofactor is Mn(2+).

The enzyme catalyses NAD(+) + (deoxyribonucleotide)n-3'-hydroxyl + 5'-phospho-(deoxyribonucleotide)m = (deoxyribonucleotide)n+m + AMP + beta-nicotinamide D-nucleotide.. In terms of biological role, DNA ligase that catalyzes the formation of phosphodiester linkages between 5'-phosphoryl and 3'-hydroxyl groups in double-stranded DNA using NAD as a coenzyme and as the energy source for the reaction. It is essential for DNA replication and repair of damaged DNA. In Clostridium botulinum (strain Okra / Type B1), this protein is DNA ligase.